Consider the following 496-residue polypeptide: O-acetyltransferase cpsE (496 aa).

Positions 203–217 are enriched in polar residues; sequence IGTQGQLPDGVQSSD. Positions 203-228 are disordered; the sequence is IGTQGQLPDGVQSSDDPTDGAGDIFE.

It belongs to the fumigaclavine B O-acetyltransferase family.

It catalyses the reaction campesine A + acetyl-CoA = campesine C + CoA. The protein operates within alkaloid biosynthesis. Functionally, O-acetyltransferase; part of the gene cluster that mediates the biosynthesis of campesine G, a dimeric indole piperazine alkaloid that shows good insecticidal activity Galleria mellonella. Within the pathway, cpsE acetylates N13 of campesine A to produce campesine C. CpsE produces an inseparable mixture of two acyl-atropisomers due to the spontaneous rotation of an acyl group at N13 of piperazine ring. The non-canonical non-ribosomal peptide synthetase cpsA catalyzes the first steps of the pathway by producing L-tryptophanal and L-valinal from their respective amino-acids. These products condensate spontaneously to form trypyl-valyl pyrazine also known as didehydrocampesine A. The NmrA-like family domain-containing oxidoreductase cpsB is the next enzyme in cps pathway and reduces the unstable didehydrocampesine A to campesine A. The methyltransferase cpsF and the acetyltransferase cpsE both recognize N13 of piperazine ring to carry out methylation and acetylation of campesine A to produce campesine C and B, respectively. The cytochrome P450 monooxygenase cpsD then acts as a dimerase that catalyzes oxidative heterocoupling between campesine B and C to produce heterodimers with unexpected 6/5/6/6/6/6/5/6 eight-ring scaffold called campesine D. Finally,the cytochrome P450 monooxygenase cpsC is a regioselective dehydrogenase that catalyzes dehydrogenation reaction towards C2-N1 to produce campesine G. The polypeptide is O-acetyltransferase cpsE (Aspergillus campestris (strain IBT 28561)).